Here is an 847-residue protein sequence, read N- to C-terminus: Leucine--tRNA ligase (847 aa).

A 'HIGH' region motif is present at residues 41-51 (PYPSGRIHMGH). The 'KMSKS' region signature appears at 619–623 (KMSKS). Position 622 (Lys622) interacts with ATP.

Belongs to the class-I aminoacyl-tRNA synthetase family.

The protein resides in the cytoplasm. The catalysed reaction is tRNA(Leu) + L-leucine + ATP = L-leucyl-tRNA(Leu) + AMP + diphosphate. In Cereibacter sphaeroides (strain KD131 / KCTC 12085) (Rhodobacter sphaeroides), this protein is Leucine--tRNA ligase.